The sequence spans 295 residues: Acetaldehyde dehydrogenase 2 (295 aa).

Position 17–20 (17–20 (TGNI)) interacts with NAD(+). Cys132 acts as the Acyl-thioester intermediate in catalysis. NAD(+)-binding positions include 164–172 (SVGPASRAN) and Asn275.

This sequence belongs to the acetaldehyde dehydrogenase family.

It carries out the reaction acetaldehyde + NAD(+) + CoA = acetyl-CoA + NADH + H(+). This Salinispora arenicola (strain CNS-205) protein is Acetaldehyde dehydrogenase 2.